A 196-amino-acid chain; its full sequence is MKESIAKVYRKTGETEIKSEINLYGEGKYDIKTGIGFFDHMLNLMARHGLIDVKLEAKGDLQVDSHHTVEDVGIVLGESFKKALGDKKGIKRYGTSFVPMDEALASVSIDISGRPYIVCDFNFTVDKLGEMDTELVEEFLRALAFNAGITLHARVLYGKNNHHMIEAVFKALGRALREAVDIDERINGVMSTKGTL.

Belongs to the imidazoleglycerol-phosphate dehydratase family.

The protein localises to the cytoplasm. It carries out the reaction D-erythro-1-(imidazol-4-yl)glycerol 3-phosphate = 3-(imidazol-4-yl)-2-oxopropyl phosphate + H2O. It participates in amino-acid biosynthesis; L-histidine biosynthesis; L-histidine from 5-phospho-alpha-D-ribose 1-diphosphate: step 6/9. The protein is Imidazoleglycerol-phosphate dehydratase of Clostridium botulinum (strain Langeland / NCTC 10281 / Type F).